Consider the following 305-residue polypeptide: Translation initiation factor eIF2B subunit alpha (305 aa).

This sequence belongs to the eIF-2B alpha/beta/delta subunits family. Component of the translation initiation factor 2B (eIF2B) complex which is a heterodecamer of two sets of five different subunits: alpha, beta, gamma, delta and epsilon. Subunits alpha, beta and delta comprise a regulatory subcomplex and subunits epsilon and gamma comprise a catalytic subcomplex. Within the complex, the hexameric regulatory complex resides at the center, with the two heterodimeric catalytic subcomplexes bound on opposite sides.

The protein resides in the cytoplasm. The protein localises to the cytosol. Its activity is regulated as follows. Activated by the chemical integrated stress response (ISR) inhibitor ISRIB which stimulates guanine nucleotide exchange factor activity for both phosphorylated and unphosphorylated eIF2. In terms of biological role, acts as a component of the translation initiation factor 2B (eIF2B) complex, which catalyzes the exchange of GDP for GTP on eukaryotic initiation factor 2 (eIF2) gamma subunit. Its guanine nucleotide exchange factor activity is repressed when bound to eIF2 complex phosphorylated on the alpha subunit, thereby limiting the amount of methionyl-initiator methionine tRNA available to the ribosome and consequently global translation is repressed. The protein is Translation initiation factor eIF2B subunit alpha (EIF2B1) of Bos taurus (Bovine).